The primary structure comprises 509 residues: MFS antiporter QDR1 (509 aa).

Residues 1-41 (MPGNREEFDIEKVLKSKKLEAIETSTEKKAPYTVFESTDKL) lie on the Cytoplasmic side of the membrane. The helical transmembrane segment at 42–62 (LLIIVLSLVGFWSAISSPIYF) threads the bilayer. Residues 63–75 (PALPTLTKYFNTT) are Extracellular-facing. The helical transmembrane segment at 76 to 96 (PSVMNISVVAYLIFQGIAPTI) threads the bilayer. Residues 97 to 106 (SSNLADTFGR) lie on the Cytoplasmic side of the membrane. The helical transmembrane segment at 107-129 (RPVILGSIIVFCAVCIAISQTNV) threads the bilayer. At 130–132 (YWL) the chain is on the extracellular side. Residues 133-155 (LALLRCFQAAGIAPVFAISSGVA) traverse the membrane as a helical segment. At 156–169 (GDICTPANRGGMVG) the chain is on the cytoplasmic side. The chain crosses the membrane as a helical span at residues 170–190 (AVSGLQLAGNGIGGLVGAALI). Residues 191 to 197 (SGFHTWR) are Extracellular-facing. Residues 198–218 (AIFIFLAIGGGVTFIFAFLVL) traverse the membrane as a helical segment. The Cytoplasmic portion of the chain corresponds to 219 to 278 (AETSRRIVGNGSIRPKNVLNKAVLIYLPHFKNKITNDYSTLQPKGPFDILGPFKIFFQKE). Residues 279–299 (VFCTLLPSGMHFAAWTVSLTS) traverse the membrane as a helical segment. Residues 300–312 (LSTELESAKYNYS) lie on the Extracellular side of the membrane. Residues 313-333 (VMKVGLVYLPQGIACFIGSLI) form a helical membrane-spanning segment. Over 334–370 (AGRCLNWYYRYRKNLYDKQMNDVPLNDRPPFNLVASR) the chain is Cytoplasmic. The helical transmembrane segment at 371-391 (LTLTIVPLAMMVIGLSAFGWC) threads the bilayer. Topologically, residues 392 to 397 (LEYKKP) are extracellular. Residues 398–418 (IISIIISTILISFSASVMMSI) traverse the membrane as a helical segment. Over 419-432 (CTTMLVDLYPKQSG) the chain is Cytoplasmic. Residues 433–453 (ASASCVNLMRCWLAALFTGVL) traverse the membrane as a helical segment. The Extracellular segment spans residues 454 to 455 (DK). Residues 456–476 (IISALGLGGTYTLLTGICLLT) form a helical membrane-spanning segment. The Cytoplasmic segment spans residues 477 to 509 (DLGLVYVLYTANQRFVNYVSPNQTAVNSDAEDY).

It belongs to the major facilitator superfamily. CAR1 family.

The protein localises to the cell membrane. Its function is as follows. MFS antiporter that does not display functional linkage as drug transporter and performs functions that significantly affect biofilm development and virulence. No substrate for transport has been identified yet, but plays an important role in the growth in the host. This Candida albicans (strain SC5314 / ATCC MYA-2876) (Yeast) protein is MFS antiporter QDR1 (QDR).